A 347-amino-acid polypeptide reads, in one-letter code: Holliday junction branch migration complex subunit RuvB (347 aa).

Residues 1–183 form a large ATPase domain (RuvB-L) region; it reads MSDERVVTPR…FGSVHRLEFY (183 aa). ATP contacts are provided by residues Leu22, Arg23, Gly64, Lys67, Thr68, Ser69, 130-132, Arg173, Tyr183, and Arg220; that span reads EDF. Thr68 is a Mg(2+) binding site. A small ATPAse domain (RuvB-S) region spans residues 184–254; that stretch reads SVDALYEIVM…VARDALAKLE (71 aa). A head domain (RuvB-H) region spans residues 257-347; that stretch reads HLGLDENDRR…NGAEQGRLWT (91 aa). DNA is bound by residues Arg312 and Arg317.

It belongs to the RuvB family. In terms of assembly, homohexamer. Forms an RuvA(8)-RuvB(12)-Holliday junction (HJ) complex. HJ DNA is sandwiched between 2 RuvA tetramers; dsDNA enters through RuvA and exits via RuvB. An RuvB hexamer assembles on each DNA strand where it exits the tetramer. Each RuvB hexamer is contacted by two RuvA subunits (via domain III) on 2 adjacent RuvB subunits; this complex drives branch migration. In the full resolvosome a probable DNA-RuvA(4)-RuvB(12)-RuvC(2) complex forms which resolves the HJ.

It is found in the cytoplasm. The enzyme catalyses ATP + H2O = ADP + phosphate + H(+). Functionally, the RuvA-RuvB-RuvC complex processes Holliday junction (HJ) DNA during genetic recombination and DNA repair, while the RuvA-RuvB complex plays an important role in the rescue of blocked DNA replication forks via replication fork reversal (RFR). RuvA specifically binds to HJ cruciform DNA, conferring on it an open structure. The RuvB hexamer acts as an ATP-dependent pump, pulling dsDNA into and through the RuvAB complex. RuvB forms 2 homohexamers on either side of HJ DNA bound by 1 or 2 RuvA tetramers; 4 subunits per hexamer contact DNA at a time. Coordinated motions by a converter formed by DNA-disengaged RuvB subunits stimulates ATP hydrolysis and nucleotide exchange. Immobilization of the converter enables RuvB to convert the ATP-contained energy into a lever motion, pulling 2 nucleotides of DNA out of the RuvA tetramer per ATP hydrolyzed, thus driving DNA branch migration. The RuvB motors rotate together with the DNA substrate, which together with the progressing nucleotide cycle form the mechanistic basis for DNA recombination by continuous HJ branch migration. Branch migration allows RuvC to scan DNA until it finds its consensus sequence, where it cleaves and resolves cruciform DNA. The chain is Holliday junction branch migration complex subunit RuvB from Roseiflexus castenholzii (strain DSM 13941 / HLO8).